The chain runs to 57 residues: MKPAVDEMFPEGAGPYVDLDEAGGSTGLLMDLAANEKAVHADFFNDFEDLFDDDDVQ.

Thr-26 carries the post-translational modification Phosphothreonine.

It belongs to the CSN9 family. As to quaternary structure, component of the CSN complex, composed of COPS1/GPS1, COPS2, COPS3, COPS4, COPS5, COPS6, COPS7 (COPS7A or COPS7B), COPS8 and COPS9. In the complex, it interacts directly with COPS3, COPS5 and COPS6.

It is found in the nucleus. The protein resides in the cytoplasm. Its subcellular location is the nucleoplasm. Functionally, component of the COP9 signalosome complex (CSN), a complex involved in various cellular and developmental processes. The CSN complex is an essential regulator of the ubiquitin (Ubl) conjugation pathway by mediating the deneddylation of the cullin subunits of SCF-type E3 ligase complexes, leading to decrease the Ubl ligase activity of SCF-type complexes such as SCF, CSA or DDB2. The complex is also involved in phosphorylation of p53/TP53, c-jun/JUN, IkappaBalpha/NFKBIA, ITPK1 and IRF8/ICSBP, possibly via its association with CK2 and PKD kinases. CSN-dependent phosphorylation of TP53 and JUN promotes and protects degradation by the Ubl system, respectively. Plays a role in cell proliferation. The sequence is that of COP9 signalosome complex subunit 9 from Mus musculus (Mouse).